The sequence spans 176 residues: Nascent polypeptide-associated complex subunit alpha (176 aa).

Residues 14-78 (SKNEKKAREL…AKVDDFTQRL (65 aa)) enclose the NAC-A/B domain. Positions 85-127 (LQQNEGVLPAGQDAVSKDPQSIQADMQAAADSATDKPSADDAV) are disordered. Residues 137–176 (LNADDIELVMQQAGVPRAKAAKALKEHDSDIVNAIMALSG) form the UBA domain.

The protein belongs to the NAC-alpha family. As to quaternary structure, part of the nascent polypeptide-associated complex (NAC), consisting of EGD2 and EGD1. NAC associates with ribosomes via EGD1.

It localises to the cytoplasm. The protein resides in the nucleus. In terms of biological role, component of the nascent polypeptide-associated complex (NAC), a dynamic component of the ribosomal exit tunnel, protecting the emerging polypeptides from interaction with other cytoplasmic proteins to ensure appropriate nascent protein targeting. The NAC complex also promotes mitochondrial protein import by enhancing productive ribosome interactions with the outer mitochondrial membrane and blocks the inappropriate interaction of ribosomes translating non-secretory nascent polypeptides with translocation sites in the membrane of the endoplasmic reticulum. EGD2 may also be involved in transcription regulation. This chain is Nascent polypeptide-associated complex subunit alpha (EGD2), found in Kluyveromyces lactis (strain ATCC 8585 / CBS 2359 / DSM 70799 / NBRC 1267 / NRRL Y-1140 / WM37) (Yeast).